The following is a 460-amino-acid chain: Phosphomethylpyrimidine synthase (460 aa).

Residues N80, M109, Y138, H174, 194–196 (SRG), 235–238 (DSLR), and E274 contribute to the substrate site. H278 lines the Zn(2+) pocket. Residue Y301 coordinates substrate. Residue H342 participates in Zn(2+) binding. [4Fe-4S] cluster-binding residues include C422, C425, and C430.

Belongs to the ThiC family. Homodimer. [4Fe-4S] cluster serves as cofactor.

It catalyses the reaction 5-amino-1-(5-phospho-beta-D-ribosyl)imidazole + S-adenosyl-L-methionine = 4-amino-2-methyl-5-(phosphooxymethyl)pyrimidine + CO + 5'-deoxyadenosine + formate + L-methionine + 3 H(+). The protein operates within cofactor biosynthesis; thiamine diphosphate biosynthesis. Functionally, catalyzes the synthesis of the hydroxymethylpyrimidine phosphate (HMP-P) moiety of thiamine from aminoimidazole ribotide (AIR) in a radical S-adenosyl-L-methionine (SAM)-dependent reaction. This is Phosphomethylpyrimidine synthase from Sulfurimonas denitrificans (strain ATCC 33889 / DSM 1251) (Thiomicrospira denitrificans (strain ATCC 33889 / DSM 1251)).